The primary structure comprises 84 residues: MLVLARRTNESIMIGDDIEIVIVDIKGDQVKIGVKAPRDVSVHRAEVYKDIQEENKKAAETKIKPADLGKIGNILKKKDSGKKE.

Belongs to the CsrA/RsmA family. As to quaternary structure, homodimer; the beta-strands of each monomer intercalate to form a hydrophobic core, while the alpha-helices form wings that extend away from the core.

It is found in the cytoplasm. In terms of biological role, a translational regulator that binds mRNA to regulate translation initiation and/or mRNA stability. Usually binds in the 5'-UTR at or near the Shine-Dalgarno sequence preventing ribosome-binding, thus repressing translation. Its main target seems to be the major flagellin gene, while its function is anatagonized by FliW. The polypeptide is Translational regulator CsrA (Leptospira interrogans serogroup Icterohaemorrhagiae serovar Lai (strain 56601)).